A 302-amino-acid chain; its full sequence is Recombination-associated protein RdgC (302 aa).

It belongs to the RdgC family.

The protein resides in the cytoplasm. It localises to the nucleoid. Its function is as follows. May be involved in recombination. In Psychromonas ingrahamii (strain DSM 17664 / CCUG 51855 / 37), this protein is Recombination-associated protein RdgC.